Reading from the N-terminus, the 142-residue chain is Large ribosomal subunit protein uL16 (142 aa).

This sequence belongs to the universal ribosomal protein uL16 family. As to quaternary structure, part of the 50S ribosomal subunit.

Functionally, binds 23S rRNA and is also seen to make contacts with the A and possibly P site tRNAs. This Thermosipho africanus (strain TCF52B) protein is Large ribosomal subunit protein uL16.